A 207-amino-acid chain; its full sequence is MKIDKLNLDGKKDSIEVLDKIFSAKINKRLVDNVLYKTNANYKGRHAKTKQQNEITGSTSKIYAQKGTGGARHASRKAPIFVGGGVAHGPKGELAYKKRKLNKSEKKLSIASLITEKNKLNNLIIFSDFGNEIKKTKEMHSIIKKFEITNSLIILDKSSKEKIEKSVRNIPNVKVTDINHFSAFDIIKFKKVVFTESSIKELEKRYS.

Belongs to the universal ribosomal protein uL4 family. In terms of assembly, part of the 50S ribosomal subunit.

One of the primary rRNA binding proteins, this protein initially binds near the 5'-end of the 23S rRNA. It is important during the early stages of 50S assembly. It makes multiple contacts with different domains of the 23S rRNA in the assembled 50S subunit and ribosome. Its function is as follows. Forms part of the polypeptide exit tunnel. The sequence is that of Large ribosomal subunit protein uL4 from Pelagibacter ubique (strain HTCC1062).